Consider the following 358-residue polypeptide: Presenilin hop-1 (358 aa).

Over 1 to 12 the chain is Cytoplasmic; that stretch reads MPRTKRVYSGKT. The chain crosses the membrane as a helical span at residues 13 to 33; sequence ITGVLYPVAICMLFVAINVKL. The Lumenal portion of the chain corresponds to 34 to 57; the sequence is SQPEQQEQSKVVYGLFHSYDTADS. Residues 58–78 form a helical membrane-spanning segment; it reads GTITLYLIGFLILTTSLGVFC. Over 79-86 the chain is Cytoplasmic; the sequence is YQMKFYKA. A helical membrane pass occupies residues 87 to 107; the sequence is IKVYVLANSIGILLVYSVFHF. The Lumenal segment spans residues 108–115; the sequence is QRIAEAQS. The chain crosses the membrane as a helical span at residues 116–136; sequence IPVSVPTFFFLILQFGGLGIT. The Cytoplasmic segment spans residues 137–148; the sequence is CLHWKSHRRLHQ. A helical transmembrane segment spans residues 149–169; sequence FYLIMLAGLTAIFILNILPDW. Thr-170 is a topological domain (lumenal). The helical transmembrane segment at 171–191 threads the bilayer; the sequence is VWMALTAISFWDIVAVLTPCG. Asp-182 is a catalytic residue. Over 192–273 the chain is Cytoplasmic; it reads PLKMLVETAN…EVREVEGTIR (82 aa). Residues 221-240 are compositionally biased toward polar residues; it reads EVDSPDTTRSNSTPLTEFNN. The interval 221-242 is disordered; sequence EVDSPDTTRSNSTPLTEFNNSS. The helical transmembrane segment at 274 to 294 threads the bilayer; it reads LGMGDFVFYSLMLGNTVQTCP. Residue Asp-278 is part of the active site. Over 295–297 the chain is Lumenal; the sequence is LPT. The chain crosses the membrane as a helical span at residues 298–318; sequence VVACFVSNLVGLTITLPIVTL. At 319-321 the chain is on the cytoplasmic side; the sequence is SQT. Positions 322 to 342 form an intramembrane region, helical; the sequence is ALPALPFPLAIAAIFYFSSHI. Positions 324–326 match the PAL motif; that stretch reads PAL. The Cytoplasmic segment spans residues 343–358; that stretch reads ALTPFTDLCTSQLILI.

The protein belongs to the peptidase A22A family. As to quaternary structure, homodimer. Component of the gamma-secretase complex, a complex probably composed of the presenilin homodimer (sel-12, hop-1 or spe-4), nicastrin (aph-2), aph-1 and pen-2. Weakly expressed.

The protein localises to the endoplasmic reticulum membrane. It localises to the golgi apparatus membrane. Its function is as follows. Probable catalytic subunit of the gamma-secretase complex, an endoprotease complex that catalyzes the intramembrane cleavage of integral membrane proteins such as Notch receptors (lin-12 or glp-1). Probably works redundantly of lin-12, which provides more presenilin function. This is Presenilin hop-1 (hop-1) from Caenorhabditis elegans.